The sequence spans 265 residues: uncharacterized protein (265 aa).

Disordered stretches follow at residues 62–94 (RNKK…ALGK) and 118–149 (MVPG…RPNP). The segment covering 126–139 (DGPKKSDTDIKDAV) has biased composition (basic and acidic residues).

This is an uncharacterized protein from Homo sapiens (Human).